The sequence spans 328 residues: Tetraacyldisaccharide 4'-kinase (328 aa).

ATP is bound at residue T55–T62.

This sequence belongs to the LpxK family.

The enzyme catalyses a lipid A disaccharide + ATP = a lipid IVA + ADP + H(+). Its pathway is glycolipid biosynthesis; lipid IV(A) biosynthesis; lipid IV(A) from (3R)-3-hydroxytetradecanoyl-[acyl-carrier-protein] and UDP-N-acetyl-alpha-D-glucosamine: step 6/6. Its function is as follows. Transfers the gamma-phosphate of ATP to the 4'-position of a tetraacyldisaccharide 1-phosphate intermediate (termed DS-1-P) to form tetraacyldisaccharide 1,4'-bis-phosphate (lipid IVA). In Escherichia coli (strain K12 / MC4100 / BW2952), this protein is Tetraacyldisaccharide 4'-kinase.